The primary structure comprises 293 residues: Protein boule-like (293 aa).

Residues 1 to 16 (METESRAQSTNQTQTD) are compositionally biased toward polar residues. Residues 1–39 (METESRAQSTNQTQTDSLSPSPNPVSPVPLNNPTSGPRY) form a disordered region. Ser19, Ser21, and Ser26 each carry phosphoserine. One can recognise an RRM domain in the interval 45–122 (NRIFVGGIDF…KKLNIGPAIR (78 aa)). The DAZ domain maps to 172–196 (PSRSISSSPVMVAQPVYQQPAYHYQ).

It belongs to the RRM DAZ family. Interacts with DAZ1 and DAZL. Testis specific. Not expressed in early embryos, primoridal germ cells and spermatogonial cells. First expressed in the cytoplasm of spermatocytes and then persists through meiosis.

The protein localises to the cytoplasm. Its function is as follows. Probable RNA-binding protein, which may be required during spermatogenesis. May act by binding to the 3'-UTR of mRNAs and regulating their translation. In Mus musculus (Mouse), this protein is Protein boule-like.